The sequence spans 144 residues: Protein SprT-like (144 aa).

The SprT-like domain occupies 4 to 143 (NKYVQEVSLQ…GKCRGKLTLK (140 aa)). Residue H64 participates in Zn(2+) binding. E65 is an active-site residue. H68 serves as a coordination point for Zn(2+).

The protein belongs to the SprT family. It depends on Zn(2+) as a cofactor.

Its subcellular location is the cytoplasm. This is Protein SprT-like from Streptococcus suis (strain 98HAH33).